Reading from the N-terminus, the 731-residue chain is Inducible ornithine decarboxylase (731 aa).

Lys-356 is modified (N6-(pyridoxal phosphate)lysine).

This sequence belongs to the Orn/Lys/Arg decarboxylase class-I family. In terms of assembly, dodecamer. Requires pyridoxal 5'-phosphate as cofactor.

The catalysed reaction is L-ornithine + H(+) = putrescine + CO2. The polypeptide is Inducible ornithine decarboxylase (odcI) (Lactobacillus sp. (strain 30a)).